The sequence spans 106 residues: Large ribosomal subunit protein uL23 (106 aa).

It belongs to the universal ribosomal protein uL23 family. As to quaternary structure, part of the 50S ribosomal subunit. Contacts protein L29, and trigger factor when it is bound to the ribosome.

One of the early assembly proteins it binds 23S rRNA. One of the proteins that surrounds the polypeptide exit tunnel on the outside of the ribosome. Forms the main docking site for trigger factor binding to the ribosome. The chain is Large ribosomal subunit protein uL23 from Acinetobacter baumannii (strain AB307-0294).